The chain runs to 193 residues: Xanthine phosphoribosyltransferase (193 aa).

Xanthine is bound by residues Leu-20 and Thr-27. 128–132 (ANGQA) is a 5-phospho-alpha-D-ribose 1-diphosphate binding site. A xanthine-binding site is contributed by Lys-156.

Belongs to the purine/pyrimidine phosphoribosyltransferase family. Xpt subfamily. Homodimer.

Its subcellular location is the cytoplasm. It catalyses the reaction XMP + diphosphate = xanthine + 5-phospho-alpha-D-ribose 1-diphosphate. It participates in purine metabolism; XMP biosynthesis via salvage pathway; XMP from xanthine: step 1/1. Converts the preformed base xanthine, a product of nucleic acid breakdown, to xanthosine 5'-monophosphate (XMP), so it can be reused for RNA or DNA synthesis. The chain is Xanthine phosphoribosyltransferase from Streptococcus pyogenes serotype M5 (strain Manfredo).